Consider the following 410-residue polypeptide: BTB and MATH domain-containing protein 42 (410 aa).

Residues 1-19 (MSSRSSWSSTEQINRTISS) are compositionally biased toward polar residues. A disordered region spans residues 1–29 (MSSRSSWSSTEQINRTISSRADDLPPQPR). The region spanning 45–173 (STKLEWKIEQ…DGTLFLICEV (129 aa)) is the MATH domain. Residues 219–287 (TDCVIHVGNK…MYTGATESLE (69 aa)) form the BTB domain. Positions 389–410 (TSNIPISVSPPPARKRLRRSAK) are disordered. Residues 401 to 410 (ARKRLRRSAK) are compositionally biased toward basic residues.

Interacts with cul-3.

It functions in the pathway protein modification; protein ubiquitination. Probable substrate-specific adapter of an E3 ubiquitin-protein ligase complex which mediates the ubiquitination and subsequent proteasomal degradation of target proteins. This is BTB and MATH domain-containing protein 42 (bath-42) from Caenorhabditis elegans.